The chain runs to 158 residues: N5-carboxyaminoimidazole ribonucleotide mutase (158 aa).

Positions 10, 13, and 40 each coordinate substrate.

Belongs to the AIR carboxylase family. Class I subfamily.

The enzyme catalyses 5-carboxyamino-1-(5-phospho-D-ribosyl)imidazole + H(+) = 5-amino-1-(5-phospho-D-ribosyl)imidazole-4-carboxylate. It functions in the pathway purine metabolism; IMP biosynthesis via de novo pathway; 5-amino-1-(5-phospho-D-ribosyl)imidazole-4-carboxylate from 5-amino-1-(5-phospho-D-ribosyl)imidazole (N5-CAIR route): step 2/2. Functionally, catalyzes the conversion of N5-carboxyaminoimidazole ribonucleotide (N5-CAIR) to 4-carboxy-5-aminoimidazole ribonucleotide (CAIR). The sequence is that of N5-carboxyaminoimidazole ribonucleotide mutase from Saccharolobus solfataricus (strain ATCC 35092 / DSM 1617 / JCM 11322 / P2) (Sulfolobus solfataricus).